The following is a 333-amino-acid chain: Ferrochelatase (333 aa).

Fe cation-binding residues include His-202 and Glu-284.

Belongs to the ferrochelatase family.

It localises to the cytoplasm. The enzyme catalyses heme b + 2 H(+) = protoporphyrin IX + Fe(2+). It functions in the pathway porphyrin-containing compound metabolism; protoheme biosynthesis; protoheme from protoporphyrin-IX: step 1/1. In terms of biological role, catalyzes the ferrous insertion into protoporphyrin IX. This Francisella tularensis subsp. holarctica (strain LVS) protein is Ferrochelatase.